The primary structure comprises 124 residues: Large ribosomal subunit protein bL12 (124 aa).

It belongs to the bacterial ribosomal protein bL12 family. In terms of assembly, homodimer. Part of the ribosomal stalk of the 50S ribosomal subunit. Forms a multimeric L10(L12)X complex, where L10 forms an elongated spine to which 2 to 4 L12 dimers bind in a sequential fashion. Binds GTP-bound translation factors.

Forms part of the ribosomal stalk which helps the ribosome interact with GTP-bound translation factors. Is thus essential for accurate translation. This Ralstonia pickettii (strain 12J) protein is Large ribosomal subunit protein bL12.